Here is a 579-residue protein sequence, read N- to C-terminus: Glutamate--tRNA ligase (579 aa).

A 'HIGH' region motif is present at residues 114 to 124 (PNPNGPWHIGH).

This sequence belongs to the class-I aminoacyl-tRNA synthetase family. Glutamate--tRNA ligase type 2 subfamily.

It is found in the cytoplasm. It catalyses the reaction tRNA(Glu) + L-glutamate + ATP = L-glutamyl-tRNA(Glu) + AMP + diphosphate. Functionally, catalyzes the attachment of glutamate to tRNA(Glu) in a two-step reaction: glutamate is first activated by ATP to form Glu-AMP and then transferred to the acceptor end of tRNA(Glu). The sequence is that of Glutamate--tRNA ligase from Haloarcula marismortui (strain ATCC 43049 / DSM 3752 / JCM 8966 / VKM B-1809) (Halobacterium marismortui).